A 179-amino-acid chain; its full sequence is Large ribosomal subunit protein uL5 (179 aa).

It belongs to the universal ribosomal protein uL5 family. As to quaternary structure, part of the 50S ribosomal subunit; part of the 5S rRNA/L5/L18/L25 subcomplex. Contacts the 5S rRNA and the P site tRNA. Forms a bridge to the 30S subunit in the 70S ribosome.

This is one of the proteins that bind and probably mediate the attachment of the 5S RNA into the large ribosomal subunit, where it forms part of the central protuberance. In the 70S ribosome it contacts protein S13 of the 30S subunit (bridge B1b), connecting the 2 subunits; this bridge is implicated in subunit movement. Contacts the P site tRNA; the 5S rRNA and some of its associated proteins might help stabilize positioning of ribosome-bound tRNAs. The sequence is that of Large ribosomal subunit protein uL5 from Rickettsia africae (strain ESF-5).